The following is a 170-amino-acid chain: Large ribosomal subunit protein bL17 (170 aa).

The span at 124–134 (AAEAPKAAKAA) shows a compositional bias: low complexity. The interval 124-170 (AAEAPKAAKAAPVKEAKPAAEEAPAKPKRTRKPKADEADAEAAKEEN) is disordered. Basic and acidic residues-rich tracts occupy residues 135–148 (PVKE…EAPA) and 156–170 (PKAD…KEEN).

It belongs to the bacterial ribosomal protein bL17 family. As to quaternary structure, part of the 50S ribosomal subunit. Contacts protein L32.

This chain is Large ribosomal subunit protein bL17, found in Desulfovibrio desulfuricans (strain ATCC 27774 / DSM 6949 / MB).